The following is a 336-amino-acid chain: 4-hydroxy-3-methylbut-2-enyl diphosphate reductase (336 aa).

Cys-37 provides a ligand contact to [4Fe-4S] cluster. Residues His-66 and His-99 each coordinate (2E)-4-hydroxy-3-methylbut-2-enyl diphosphate. Residues His-66 and His-99 each contribute to the dimethylallyl diphosphate site. 2 residues coordinate isopentenyl diphosphate: His-66 and His-99. [4Fe-4S] cluster is bound at residue Cys-121. A (2E)-4-hydroxy-3-methylbut-2-enyl diphosphate-binding site is contributed by His-149. Position 149 (His-149) interacts with dimethylallyl diphosphate. His-149 provides a ligand contact to isopentenyl diphosphate. Glu-151 functions as the Proton donor in the catalytic mechanism. Thr-189 is a (2E)-4-hydroxy-3-methylbut-2-enyl diphosphate binding site. Cys-219 is a binding site for [4Fe-4S] cluster. 4 residues coordinate (2E)-4-hydroxy-3-methylbut-2-enyl diphosphate: Ser-247, Ser-248, Asn-249, and Ser-292. Dimethylallyl diphosphate-binding residues include Ser-247, Ser-248, Asn-249, and Ser-292. Positions 247, 248, 249, and 292 each coordinate isopentenyl diphosphate.

This sequence belongs to the IspH family. It depends on [4Fe-4S] cluster as a cofactor.

It carries out the reaction isopentenyl diphosphate + 2 oxidized [2Fe-2S]-[ferredoxin] + H2O = (2E)-4-hydroxy-3-methylbut-2-enyl diphosphate + 2 reduced [2Fe-2S]-[ferredoxin] + 2 H(+). It catalyses the reaction dimethylallyl diphosphate + 2 oxidized [2Fe-2S]-[ferredoxin] + H2O = (2E)-4-hydroxy-3-methylbut-2-enyl diphosphate + 2 reduced [2Fe-2S]-[ferredoxin] + 2 H(+). Its pathway is isoprenoid biosynthesis; dimethylallyl diphosphate biosynthesis; dimethylallyl diphosphate from (2E)-4-hydroxy-3-methylbutenyl diphosphate: step 1/1. It functions in the pathway isoprenoid biosynthesis; isopentenyl diphosphate biosynthesis via DXP pathway; isopentenyl diphosphate from 1-deoxy-D-xylulose 5-phosphate: step 6/6. Functionally, catalyzes the conversion of 1-hydroxy-2-methyl-2-(E)-butenyl 4-diphosphate (HMBPP) into a mixture of isopentenyl diphosphate (IPP) and dimethylallyl diphosphate (DMAPP). Acts in the terminal step of the DOXP/MEP pathway for isoprenoid precursor biosynthesis. The sequence is that of 4-hydroxy-3-methylbut-2-enyl diphosphate reductase from Rhodococcus opacus (strain B4).